The following is a 1654-amino-acid chain: METPAGESSARGYGPPPAPAPAAERKKSHRAPSPARPKDVAGWSLAKGRRGTGPGSATACGTASSARPDKKGRAVAPGTRGTGPRVAGVRTGVRAKGRPRPGTGPRPPPPPPSLTDSSSEVSDCASEEARQLGLELALSSDAESAAGGPAGTRTGQPPQPAQSGQQPPRPPASPDEPSVAASSVGSSRLPLSASLAFSDLTEEMLDCGPGGLVRELEELRSENDYLKDEIEELRAEMLEMRDVYMEEDVYQLQELRQQLDQASKTCRILQYRLRKAERRSLRAAQTGQVDGELIRGLEQDVKVSKDISMRLHKELEVVEKKRMRLEEENEGLRQRLIETELAKQVLQTELDRPREHSLKKRGTRSLGKTDKKPTAQEDSADLKCQLHFAKEESALMCKKLTKLAKENDSMKEELLKYRSLYGDLDAALSAEELADAPHSRETELKVHLKLVEEEANLLSRRIVELEVENRGLRAEMDDMKDHGGGGGPEARLAFSSLGGECGESLAELRRHLQFVEEEAELLRRSSAELEDQNKLLLNELAKYRSEHELDVTLSEDSCSVLSEPSQEELAAAKLQIGELSGKVKKLQYENRVLLSNLQRCDLASCQSTRPMLETDAEAGDSAQCVPAPLGETLEPHAARLCRAREAEALPGLREQAALVSKAIDVLVADANGFSVGLRLCLDNECADLRLHEAPDNSEGPRDAKLIHAILVRLSVLQQELNAFTRKADVALGSSGKEQPEPFPALPALGSQGPAKEIMLSKDLGSDFQPPDFRDLLEWEPRIREAFRTGDLESKPDPSRNFRPYRAEDNDSYASEIKDLQLVLAEAHDSLRGLQEQLSQERQLRKEEADSFNQKMVQLKEDQQRALLRREFELQSLSLQRRLEQKFWSQEKNILVQESQQFKHNFLLLFMKLRWFLKRWRQGKVLPSEEDDFLEVNSMKELYLLMEEEEMNAQHSDNKACTGESWTQNTPNECIKTLADMKVTLKELCWLLQDERRGLTELQQQFAKAKATWETERAELKGHASQMELKAGKGASERPGPDWKAALQREREEQQHLLAESYSAVMELTRQLQLSERHWSQEKLQLVERLQGEKQQVEQQVKELQNRLSQLQKAAEPWVLKHSDMEKQDNSWKEARSEKTHDKEGVSEAELGGTGLKRTKSVSSMSEFESLLDCSPYLAGGDARNKKLPNGPAFAFVSTEPVEPEKDAKEKAGLSTRDCSHIGSLACQEPAGRQMQRSYTAPDKTGIRVYYSPPVARRLGVPVVHDKEGKILIEPGFLFTTAKPKESAEADGLAESSYSRWLCNFSRQRLDGGSGASTSGSGPAFPALHDFEMSGNMSDDMKEITNCVRQAMRSGSLERKVKNTSSQTVGVATVGTQTIRTVSVGLQTDPPRSSLHSKSWSPRSSSLVSVRSKQISSSLDKVHSRIERPCCSPKYGSPKLQRRSVSKLDSTKDRSLWNLHQGKQNGSAWARSTTTRDSPVLRNINDGLSSLFSVVEHSGSTESVWKLGMSEARTKPEPPKYGIVQEFFRNVCGRAPSPTTAAGEESCKKPEPLSPASYHQPEGVSRILNKKAAKAGGSEEVRPTMLSQVGKDGILRDGDGSLILPSEDAVCDCSAQSLASCFIRPSRNTIRHSPSKCRLHPSESGWGGEERAAPQ.

A disordered region spans residues 1-188 (METPAGESSA…VAASSVGSSR (188 aa)). Over residues 55 to 66 (GSATACGTASSA) the composition is skewed to low complexity. Residues 102–113 (GTGPRPPPPPPS) show a composition bias toward pro residues. Residues 132–147 (LGLELALSSDAESAAG) show a composition bias toward low complexity. The tract at residues 209–238 (PGGLVRELEELRSENDYLKDEIEELRAEML) is required for association with Golgi apparatus membrane. Coiled-coil stretches lie at residues 216-279 (LEEL…AERR), 308-349 (SMRL…LQTE), 448-546 (LKLV…YRSE), 816-843 (IKDL…ERQL), and 1079-1113 (SQEK…LQKA). The interval 348 to 379 (TELDRPREHSLKKRGTRSLGKTDKKPTAQEDS) is disordered. Residues 1122-1145 (SDMEKQDNSWKEARSEKTHDKEGV) are compositionally biased toward basic and acidic residues. Positions 1122-1146 (SDMEKQDNSWKEARSEKTHDKEGVS) are disordered. Residues Ser-1165 and Ser-1251 each carry the phosphoserine modification. Residues 1406–1505 (LVSVRSKQIS…HSGSTESVWK (100 aa)) are KR-rich domain required for microtubules binding. Disordered stretches follow at residues 1427–1450 (RPCC…LDST), 1537–1560 (PTTA…YHQP), and 1627–1654 (NTIR…AAPQ). The segment covering 1628 to 1638 (TIRHSPSKCRL) has biased composition (basic residues).

This sequence belongs to the MTCL family. As to quaternary structure, interacts with CLASP2. Interacts with CLASP1. The C-terminal SOGA 25 kDa form occurs as a monomer. Proteolytically cleaved into a C-terminal SOGA 25 kDa form that is detected in plasma. Proteolytically cleaved in primary hepatocytes into a C-terminal SOGA 80 kDa form. In terms of processing, phosphorylated during mitosis in a CDK1-dependent manner. As to expression, expressed in liver (at protein level).

The protein localises to the secreted. The protein resides in the cytoplasm. It is found in the cytoskeleton. Its subcellular location is the golgi apparatus membrane. It localises to the midbody. Functionally, microtubule-associated factor that enables integration of the centrosomal and Golgi-associated microtubules on the Golgi membrane, supporting directional migration. Preferentially acts on the perinuclear microtubules accumulated around the Golgi. Associates with the Golgi membrane through the N-terminal coiled-coil region and directly binds microtubules through the C-terminal domain. Required for faithful chromosome segregation during mitosis. Regulates autophagy by playing a role in the reduction of glucose production in an adiponectin- and insulin-dependent manner. This Mus musculus (Mouse) protein is Microtubule cross-linking factor 2 (Mtcl2).